The sequence spans 364 residues: Phenylalanine dehydrogenase (364 aa).

Residue Arg62 participates in NAD(+) binding. Lys86 is an L-phenylalanine binding site. Residue Lys98 is the Proton donor/acceptor of the active site. Residues Asp133, Ser164, Thr168, 255–256 (AM), and 276–278 (AAN) each bind NAD(+). An L-phenylalanine-binding site is contributed by Asn278.

It belongs to the Glu/Leu/Phe/Val dehydrogenases family.

The enzyme catalyses L-phenylalanine + NAD(+) + H2O = 3-phenylpyruvate + NH4(+) + NADH + H(+). It participates in amino-acid biosynthesis; L-phenylalanine biosynthesis; L-phenylalanine from phenylpyruvate (PDH route): step 1/1. Its function is as follows. Catalyzes the reversible NAD(+)-dependent oxidative deamination of L-phenylalanine to phenylpyruvate. The chain is Phenylalanine dehydrogenase from Rhodococcus jostii (strain RHA1).